Reading from the N-terminus, the 75-residue chain is UPF0346 protein LJ_1103 (75 aa).

It belongs to the UPF0346 family.

This Lactobacillus johnsonii (strain CNCM I-12250 / La1 / NCC 533) protein is UPF0346 protein LJ_1103.